The primary structure comprises 508 residues: Photosystem II CP47 reaction center protein (508 aa).

Transmembrane regions (helical) follow at residues 21 to 36 (SVHI…WAGS), 101 to 115 (IMFS…IWHW), 140 to 156 (GIHL…FGAF), 203 to 218 (IAAG…FHLS), 237 to 252 (VLSS…AFVV), and 457 to 472 (SFAL…HGAR).

This sequence belongs to the PsbB/PsbC family. PsbB subfamily. As to quaternary structure, PSII is composed of 1 copy each of membrane proteins PsbA, PsbB, PsbC, PsbD, PsbE, PsbF, PsbH, PsbI, PsbJ, PsbK, PsbL, PsbM, PsbT, PsbX, PsbY, PsbZ, Psb30/Ycf12, at least 3 peripheral proteins of the oxygen-evolving complex and a large number of cofactors. It forms dimeric complexes. It depends on Binds multiple chlorophylls. PSII binds additional chlorophylls, carotenoids and specific lipids. as a cofactor.

It localises to the plastid. The protein localises to the chloroplast thylakoid membrane. In terms of biological role, one of the components of the core complex of photosystem II (PSII). It binds chlorophyll and helps catalyze the primary light-induced photochemical processes of PSII. PSII is a light-driven water:plastoquinone oxidoreductase, using light energy to abstract electrons from H(2)O, generating O(2) and a proton gradient subsequently used for ATP formation. The chain is Photosystem II CP47 reaction center protein from Ceratophyllum demersum (Rigid hornwort).